A 367-amino-acid chain; its full sequence is Mating-type protein ALPHA2 (367 aa).

A DNA-binding region (homeobox; TALE-type) is located at residues 273 to 338 (GADAIDSEKL…NKRRTGAKKR (66 aa)).

Belongs to the TALE/M-ATYP homeobox family. Forms a heterodimer with A1.

Its subcellular location is the nucleus. Mating type proteins are sequence specific DNA-binding proteins that act as master switches in yeast differentiation by controlling gene expression in a cell type-specific fashion. Transcriptional corepressor that acts in conjunction with A1 to repress transcription of haploid-specific genes. The sequence is that of Mating-type protein ALPHA2 (MATB2) from Yarrowia lipolytica (strain CLIB 122 / E 150) (Yeast).